The following is a 335-amino-acid chain: Pro-cathepsin H (335 aa).

The N-terminal stretch at 1-22 (MWATLPLLCAGAWLLGVPVCGA) is a signal peptide. Positions 23 to 97 (AELCVNSLEK…AEIKHKYLWS (75 aa)) are cleaved as a propeptide — activation peptide. A glycan (N-linked (GlcNAc...) asparagine) is linked at N101. 4 disulfide bridges follow: C102–C327, C138–C181, C172–C214, and C272–C322. Positions 106–115 (KSNYLRGTGP) are excised as a propeptide. C141 is a catalytic residue. N-linked (GlcNAc...) asparagine glycosylation is present at N230. Active-site residues include H281 and N301.

This sequence belongs to the peptidase C1 family. Composed of a mini chain and a large chain. The large chain may be split into heavy and light chain. All chains are held together by disulfide bonds.

The protein localises to the lysosome. It catalyses the reaction Hydrolysis of proteins, acting as an aminopeptidase (notably, cleaving Arg-|-Xaa bonds) as well as an endopeptidase.. Its function is as follows. Important for the overall degradation of proteins in lysosomes. This chain is Pro-cathepsin H (CTSH), found in Homo sapiens (Human).